A 308-amino-acid chain; its full sequence is 15-cis-phytoene synthase (308 aa).

This sequence belongs to the phytoene/squalene synthase family. ATP serves as cofactor. It depends on Mn(2+) as a cofactor. Requires Mg(2+) as cofactor.

It catalyses the reaction 2 (2E,6E,10E)-geranylgeranyl diphosphate = 15-cis-phytoene + 2 diphosphate. It functions in the pathway carotenoid biosynthesis; phytoene biosynthesis. In terms of biological role, involved in the biosynthesis of carotenoids. Catalyzes the condensation of two molecules of geranylgeranyl diphosphate (GGPP) to give prephytoene diphosphate (PPPP) and the subsequent rearrangement of the cyclopropylcarbinyl intermediate to yield 15-cis-phytoene. This is 15-cis-phytoene synthase (crtB) from Synechococcus elongatus (strain ATCC 33912 / PCC 7942 / FACHB-805) (Anacystis nidulans R2).